The sequence spans 508 residues: MSQEKYIMAIDQGTTSSRAIIFNQKGEKVSSSQKEFPQIFPHAGWVEHNANQIWNSVQSVIAGAFIESSIKPSQIEAIGITNQRETTVVWDKKTGVPIYNAIVWQSRQTAPIAEQLKEDGHTKMIHEKTGLVIDAYFSATKIRWILDHVPGAQERAEKGELLFGTIDTWLVWKLTDGAVHVTDYSNAARTMLYNIKDLTWDDEILELLNIPKDMLPEVKSNSEIYGKTAAFHFYGGEVPISGMAGDQQAALFGQLAFEPGMVKNTYGTGSFIIMNTGDEMQLSSNNLLTTIGYGIGGKVHYALEGSIFIAGSAIQWLRDGLKMIETSPESEQFALASTSDDEVYVVPAFTGLGAPYWDSNARGSVFGLTRGTSKEDFVKATLQSIAYQVRDVIDTMQVDSGIDIQQLRVDGGAAMNNMLMQFQADILGIDIARAKNLETTALGAAFLAGLAVGYWEDMDALKELNATGQLFKASMNESRKEKLYKGWKRAVKATQVFTQEEDADDDAK.

T14 lines the ADP pocket. ATP is bound by residues T14, T15, and S16. Position 14 (T14) interacts with sn-glycerol 3-phosphate. R18 serves as a coordination point for ADP. Sn-glycerol 3-phosphate-binding residues include R84, E85, and Y136. The glycerol site is built by R84, E85, and Y136. H232 bears the Phosphohistidine; by HPr mark. Residue D246 participates in sn-glycerol 3-phosphate binding. 2 residues coordinate glycerol: D246 and Q247. T268 and G311 together coordinate ADP. Residues T268, G311, Q315, and G412 each coordinate ATP. The ADP site is built by G412 and N416.

It belongs to the FGGY kinase family. In terms of assembly, homotetramer and homodimer (in equilibrium). Post-translationally, the phosphoenolpyruvate-dependent sugar phosphotransferase system (PTS), including enzyme I, and histidine-containing protein (HPr) are required for the phosphorylation, which leads to the activation of the enzyme.

The catalysed reaction is glycerol + ATP = sn-glycerol 3-phosphate + ADP + H(+). It functions in the pathway polyol metabolism; glycerol degradation via glycerol kinase pathway; sn-glycerol 3-phosphate from glycerol: step 1/1. With respect to regulation, activated by phosphorylation and inhibited by fructose 1,6-bisphosphate (FBP). Functionally, key enzyme in the regulation of glycerol uptake and metabolism. Catalyzes the phosphorylation of glycerol to yield sn-glycerol 3-phosphate. The protein is Glycerol kinase of Streptococcus pyogenes serotype M4 (strain MGAS10750).